The sequence spans 352 residues: MSASAAVATRHDWSLAEVRALFEQPFNDLLFQAQTVHRAYFDPNRVQVSTLLSIKTGACPEDCKYCPQSGHYNTGLDKEKLMEVQKVLEAAAEAKAIGSTRFCMGAAWKHPSAKDMPYVLEMVKGVKRLGLETCMTLGRLTQEQTQALADAGLDYYNHNLDTSPEFYGNIITTRTYGERLQTLAYVREAGMKICSGGILGMGESVDDRAGLLIQLANLPEHPESVPINMLVKVKGTPLAEEKDVDPFDFIRTLAVARIMMPKSHVRLSAGREQMNEQMQALAFMAGANSIFYGEKLLTTKNPQAEKDMQLFARLGIKPEEREEHADEVHQAAIEQALVEQRDSQLFYNAASA.

In terms of domain architecture, Radical SAM core spans 44-262; sequence NRVQVSTLLS…LAVARIMMPK (219 aa). Cys-59, Cys-63, and Cys-66 together coordinate [4Fe-4S] cluster. 4 residues coordinate [2Fe-2S] cluster: Cys-103, Cys-134, Cys-194, and Arg-266.

This sequence belongs to the radical SAM superfamily. Biotin synthase family. Homodimer. [4Fe-4S] cluster serves as cofactor. The cofactor is [2Fe-2S] cluster.

The catalysed reaction is (4R,5S)-dethiobiotin + (sulfur carrier)-SH + 2 reduced [2Fe-2S]-[ferredoxin] + 2 S-adenosyl-L-methionine = (sulfur carrier)-H + biotin + 2 5'-deoxyadenosine + 2 L-methionine + 2 oxidized [2Fe-2S]-[ferredoxin]. The protein operates within cofactor biosynthesis; biotin biosynthesis; biotin from 7,8-diaminononanoate: step 2/2. Catalyzes the conversion of dethiobiotin (DTB) to biotin by the insertion of a sulfur atom into dethiobiotin via a radical-based mechanism. This is Biotin synthase from Pseudomonas paraeruginosa (strain DSM 24068 / PA7) (Pseudomonas aeruginosa (strain PA7)).